A 201-amino-acid polypeptide reads, in one-letter code: 3-isopropylmalate dehydratase small subunit (201 aa).

It belongs to the LeuD family. LeuD type 1 subfamily. As to quaternary structure, heterodimer of LeuC and LeuD.

The catalysed reaction is (2R,3S)-3-isopropylmalate = (2S)-2-isopropylmalate. It functions in the pathway amino-acid biosynthesis; L-leucine biosynthesis; L-leucine from 3-methyl-2-oxobutanoate: step 2/4. Functionally, catalyzes the isomerization between 2-isopropylmalate and 3-isopropylmalate, via the formation of 2-isopropylmaleate. This Shewanella sp. (strain ANA-3) protein is 3-isopropylmalate dehydratase small subunit.